The chain runs to 391 residues: Small ribosomal subunit protein bS1 (391 aa).

4 consecutive S1 motif domains span residues 16 to 90 (GDKV…LSRR), 108 to 173 (NEII…LSRK), 194 to 262 (GDVI…LSIK), and 279 to 348 (NDVI…LSIK).

The protein belongs to the bacterial ribosomal protein bS1 family.

Binds mRNA; thus facilitating recognition of the initiation point. It is needed to translate mRNA with a short Shine-Dalgarno (SD) purine-rich sequence. The sequence is that of Small ribosomal subunit protein bS1 (rpsA) from Staphylococcus aureus (strain N315).